The primary structure comprises 191 residues: Large ribosomal subunit protein uL3 (191 aa).

Residues 115–137 (GGPASHGSRFHRRHGSIGNREWP) are disordered.

Belongs to the universal ribosomal protein uL3 family. Part of the 50S ribosomal subunit. Forms a cluster with proteins L14 and L19.

In terms of biological role, one of the primary rRNA binding proteins, it binds directly near the 3'-end of the 23S rRNA, where it nucleates assembly of the 50S subunit. The protein is Large ribosomal subunit protein uL3 (rplC) of Campylobacter jejuni subsp. jejuni serotype O:2 (strain ATCC 700819 / NCTC 11168).